The chain runs to 269 residues: MSLVLINFYRFVALGDCDRWRQWLQDLCTALGLRGTILLAPEGINAGLAGNTEAIAQFLSELQQHPPFANLSFKSATVTDWPFARLKVKVKPEIVSLGCPELNPAERTGTLVAPQDWNQLLQDPEVVLIDVRNRFEIALGSFPRAIDPQTDRFRDFPRFVQEQLLPQPPAKVAMFCTGGIRCEKASAYLLEQGIETVYQLEGGILNYLEAIAPEENHWQGDCFVFDERIAVDRQLQTPQHQLCPACGQPVVATTCSHCQDSVQASSSPK.

The 95-residue stretch at 122–216 (QDPEVVLIDV…YLEAIAPEEN (95 aa)) folds into the Rhodanese domain. The active-site Cysteine persulfide intermediate is C176.

Belongs to the TrhO family.

The enzyme catalyses uridine(34) in tRNA + AH2 + O2 = 5-hydroxyuridine(34) in tRNA + A + H2O. In terms of biological role, catalyzes oxygen-dependent 5-hydroxyuridine (ho5U) modification at position 34 in tRNAs. The sequence is that of tRNA uridine(34) hydroxylase from Synechococcus elongatus (strain ATCC 33912 / PCC 7942 / FACHB-805) (Anacystis nidulans R2).